Here is a 755-residue protein sequence, read N- to C-terminus: Diamine oxidase [copper-containing] (755 aa).

Positions 1-24 are cleaved as a signal peptide; the sequence is MGRGTLALGWAGAALLLLQMLAAA. N-linked (GlcNAc...) asparagine glycosylation is present at Asn115. Cysteines 182 and 186 form a disulfide. Asp376 serves as the catalytic Proton acceptor. Cys394 and Cys420 are disulfide-bonded. Tyr464 acts as the Schiff-base intermediate with substrate; via topaquinone in catalysis. At Tyr464 the chain carries 2',4',5'-topaquinone. The Cu(2+) site is built by His513 and His515. Ca(2+) is bound by residues Asp522, Leu523, and Asp524. Asn541 carries an N-linked (GlcNAc...) asparagine glycan. Ca(2+) contacts are provided by Glu565, Phe656, Asn659, Glu661, Asp667, and Leu668. His678 contacts Cu(2+). Residue Asn749 is glycosylated (N-linked (GlcNAc...) asparagine).

Belongs to the copper/topaquinone oxidase family. As to quaternary structure, homodimer; disulfide-linked. It depends on Cu(2+) as a cofactor. Requires Ca(2+) as cofactor. The cofactor is L-topaquinone. Post-translationally, topaquinone (TPQ) is generated by copper-dependent autoxidation of a specific tyrosyl residue. N-glycosylated; the glycans are primarily linear, di-, or tribranched fucosylated complex type.

The protein resides in the secreted. Its subcellular location is the extracellular space. It is found in the cell membrane. It carries out the reaction histamine + O2 + H2O = imidazole-4-acetaldehyde + H2O2 + NH4(+). The catalysed reaction is N(tau)-methylhistamine + O2 + H2O = 1-methylimidazole-4-acetaldehyde + H2O2 + NH4(+). It catalyses the reaction putrescine + O2 + H2O = 4-aminobutanal + H2O2 + NH4(+). The enzyme catalyses cadaverine + O2 + H2O = 5-aminopentanal + H2O2 + NH4(+). Its activity is regulated as follows. Inhibited by amiloride and amiloride analogs. In terms of biological role, catalyzes the oxidative deamination of primary amines to the corresponding aldehydes with the concomitant production of hydrogen peroxide and ammonia. Its preferred substrates in vitro are the diamines histamine and 1-methylhistamine and it could therefore play a role in allergic and immune responses. Has a broad specificity for diamines and can also act on cadaverine and putrescine, two products of amino acid catabolism. It could also act on polyamines, like spermidine and spermine though less efficiently, and regulate various biological processes. In Sus scrofa (Pig), this protein is Diamine oxidase [copper-containing].